Here is a 119-residue protein sequence, read N- to C-terminus: 5-hydroxyisourate hydrolase (119 aa).

The substrate site is built by His8, Arg47, and Tyr116.

Belongs to the transthyretin family. 5-hydroxyisourate hydrolase subfamily. In terms of assembly, homotetramer.

It carries out the reaction 5-hydroxyisourate + H2O = 5-hydroxy-2-oxo-4-ureido-2,5-dihydro-1H-imidazole-5-carboxylate + H(+). The protein operates within purine metabolism; urate degradation; (S)-allantoin from urate: step 2/3. Its function is as follows. Catalyzes the hydrolysis of 5-hydroxyisourate (HIU) to 2-oxo-4-hydroxy-4-carboxy-5-ureidoimidazoline (OHCU). The sequence is that of 5-hydroxyisourate hydrolase from Halalkalibacterium halodurans (strain ATCC BAA-125 / DSM 18197 / FERM 7344 / JCM 9153 / C-125) (Bacillus halodurans).